A 105-amino-acid polypeptide reads, in one-letter code: Co-chaperonin GroES 3 (105 aa).

It belongs to the GroES chaperonin family. As to quaternary structure, heptamer of 7 subunits arranged in a ring. Interacts with the chaperonin GroEL.

It localises to the cytoplasm. Its function is as follows. Together with the chaperonin GroEL, plays an essential role in assisting protein folding. The GroEL-GroES system forms a nano-cage that allows encapsulation of the non-native substrate proteins and provides a physical environment optimized to promote and accelerate protein folding. GroES binds to the apical surface of the GroEL ring, thereby capping the opening of the GroEL channel. The polypeptide is Co-chaperonin GroES 3 (Rhizobium meliloti (strain 1021) (Ensifer meliloti)).